Reading from the N-terminus, the 635-residue chain is 1-deoxy-D-xylulose-5-phosphate synthase (635 aa).

Thiamine diphosphate is bound by residues His78 and 119-121 (GHS). Asp151 lines the Mg(2+) pocket. Thiamine diphosphate is bound by residues 152–153 (GA), Asn180, Tyr289, and Glu371. Asn180 is a binding site for Mg(2+).

It belongs to the transketolase family. DXPS subfamily. As to quaternary structure, homodimer. The cofactor is Mg(2+). Thiamine diphosphate is required as a cofactor.

The catalysed reaction is D-glyceraldehyde 3-phosphate + pyruvate + H(+) = 1-deoxy-D-xylulose 5-phosphate + CO2. Its pathway is metabolic intermediate biosynthesis; 1-deoxy-D-xylulose 5-phosphate biosynthesis; 1-deoxy-D-xylulose 5-phosphate from D-glyceraldehyde 3-phosphate and pyruvate: step 1/1. In terms of biological role, catalyzes the acyloin condensation reaction between C atoms 2 and 3 of pyruvate and glyceraldehyde 3-phosphate to yield 1-deoxy-D-xylulose-5-phosphate (DXP). In Bartonella tribocorum (strain CIP 105476 / IBS 506), this protein is 1-deoxy-D-xylulose-5-phosphate synthase.